The primary structure comprises 23 residues: Acetylcholine receptor subunit gamma (23 aa).

It belongs to the ligand-gated ion channel (TC 1.A.9) family. Acetylcholine receptor (TC 1.A.9.1) subfamily. Gamma/CHRNG sub-subfamily. As to quaternary structure, pentamer of two alpha chains, and one each of the beta, delta, and gamma chains.

The protein resides in the postsynaptic cell membrane. It is found in the cell membrane. It catalyses the reaction K(+)(in) = K(+)(out). The catalysed reaction is Na(+)(in) = Na(+)(out). In terms of biological role, after binding acetylcholine, the AChR responds by an extensive change in conformation that affects all subunits and leads to opening of an ion-conducting channel across the plasma membrane. The chain is Acetylcholine receptor subunit gamma (chrng) from Electrophorus electricus (Electric eel).